We begin with the raw amino-acid sequence, 429 residues long: MHDIELIKKDPELFDRAMISRGFGEQAEKIIELDLKKRGELSTLYSLREQRNAVTREVALLKRSGIECTPQIEASKKLAEEIATLEHSIKEDTKLSNLLESLPNVPDPIVPVGKDESHNVEVRSHGQRRDFAFGIRPHYELGEMLNLLDFKRAAVLSGARFSILKGQLAELERALASFMLDMHTKEFGYTEISHPVLVNERTMYNVGQLPKFHDDSFRTTNNFRLAPTSEVALANLVSGTTLPRDSLPMRFTAYSQCFRAEAGSAGLDTRGMMRQHQFGKVELVSITTSDASNAELERMTSIAEEVLKRLELPYRVMLLCSGDMGFSASISYDLEVWMPAQDKYREISSCSNCRDFQARRMGAKYFFFENKKKHSTLVHTLNGSALAIGRTIAAIMENYQNEDGSITIPDVLRKYTGASAIMRAEDALP.

Residue 228–230 (TSE) participates in L-serine binding. 259–261 (RAE) lines the ATP pocket. E282 is an L-serine binding site. 346–349 (EISS) is an ATP binding site. An L-serine-binding site is contributed by S384.

This sequence belongs to the class-II aminoacyl-tRNA synthetase family. Type-1 seryl-tRNA synthetase subfamily. Homodimer. The tRNA molecule binds across the dimer.

Its subcellular location is the cytoplasm. The enzyme catalyses tRNA(Ser) + L-serine + ATP = L-seryl-tRNA(Ser) + AMP + diphosphate + H(+). It carries out the reaction tRNA(Sec) + L-serine + ATP = L-seryl-tRNA(Sec) + AMP + diphosphate + H(+). It functions in the pathway aminoacyl-tRNA biosynthesis; selenocysteinyl-tRNA(Sec) biosynthesis; L-seryl-tRNA(Sec) from L-serine and tRNA(Sec): step 1/1. Catalyzes the attachment of serine to tRNA(Ser). Is also able to aminoacylate tRNA(Sec) with serine, to form the misacylated tRNA L-seryl-tRNA(Sec), which will be further converted into selenocysteinyl-tRNA(Sec). In Anaplasma marginale (strain St. Maries), this protein is Serine--tRNA ligase.